Consider the following 134-residue polypeptide: Small ribosomal subunit protein bS16 (134 aa).

The interval 79-134 (AGIAKRPSRNNPTKGEPGKKAQERLALAKQAEEEAAAKAAEAAAAAAAPAEEAASE) is disordered. Positions 115-134 (AKAAEAAAAAAAPAEEAASE) are enriched in low complexity.

It belongs to the bacterial ribosomal protein bS16 family.

This chain is Small ribosomal subunit protein bS16, found in Brucella canis (strain ATCC 23365 / NCTC 10854 / RM-666).